Here is a 218-residue protein sequence, read N- to C-terminus: MTQDELKKAVGWAALEYVKPGTIVGVGTGSTASHFIDALATMKGQIEGAVSSSEASTAKLKSYGIPVFDCNEVDSLDIYVDGADEINHQMQMIKGGGAALTREKIIAAVAKTFVCIVDESKQVDVLGKFPLPVEVIPMARSYVARELVKLGGLPEYRENVVTDNGNVILDVYNLTILNPIELENKINSIAGVVTVGLFANRGADIVLMGTSEGVKTIK.

Substrate is bound by residues 28-31, 81-84, and 94-97; these read TGST, DGAD, and KGGG. The active-site Proton acceptor is the E103. K121 is a substrate binding site.

It belongs to the ribose 5-phosphate isomerase family. Homodimer.

The catalysed reaction is aldehydo-D-ribose 5-phosphate = D-ribulose 5-phosphate. It functions in the pathway carbohydrate degradation; pentose phosphate pathway; D-ribose 5-phosphate from D-ribulose 5-phosphate (non-oxidative stage): step 1/1. In terms of biological role, catalyzes the reversible conversion of ribose-5-phosphate to ribulose 5-phosphate. This chain is Ribose-5-phosphate isomerase A, found in Proteus mirabilis (strain HI4320).